Here is a 101-residue protein sequence, read N- to C-terminus: Large ribosomal subunit protein uL24 (101 aa).

It belongs to the universal ribosomal protein uL24 family. In terms of assembly, part of the 50S ribosomal subunit.

Functionally, one of two assembly initiator proteins, it binds directly to the 5'-end of the 23S rRNA, where it nucleates assembly of the 50S subunit. One of the proteins that surrounds the polypeptide exit tunnel on the outside of the subunit. This Streptococcus pyogenes serotype M2 (strain MGAS10270) protein is Large ribosomal subunit protein uL24.